A 368-amino-acid polypeptide reads, in one-letter code: tRNA-specific 2-thiouridylase MnmA (368 aa).

ATP-binding positions include 11–18 (GMSGGVDS) and Met-37. Residues 97-99 (NPD) are interaction with target base in tRNA. Cys-102 (nucleophile) is an active-site residue. Residues Cys-102 and Cys-199 are joined by a disulfide bond. Gly-127 provides a ligand contact to ATP. Positions 149–151 (KDQ) are interaction with tRNA. Cys-199 serves as the catalytic Cysteine persulfide intermediate. An interaction with tRNA region spans residues 311–312 (RY).

This sequence belongs to the MnmA/TRMU family. Interacts with TusE.

It localises to the cytoplasm. It carries out the reaction S-sulfanyl-L-cysteinyl-[protein] + uridine(34) in tRNA + AH2 + ATP = 2-thiouridine(34) in tRNA + L-cysteinyl-[protein] + A + AMP + diphosphate + H(+). Functionally, catalyzes the 2-thiolation of uridine at the wobble position (U34) of tRNA(Lys), tRNA(Glu) and tRNA(Gln), leading to the formation of s(2)U34, the first step of tRNA-mnm(5)s(2)U34 synthesis. Sulfur is provided by IscS, via a sulfur-relay system. Binds ATP and its substrate tRNAs. The chain is tRNA-specific 2-thiouridylase MnmA from Shigella boydii serotype 4 (strain Sb227).